A 235-amino-acid polypeptide reads, in one-letter code: MGQKVHPNGIRLGIVKPWNSTWFANTQDFADNLDGDFKVRKFLNKELANASVSRITIERPAKSIRVTIHTARPGIVIGKKGEDVEKLRNAVSQIAGVPAQINIAEVKKPELDAKLVADSIASQLERRVMFRRAMKRAVQNAMRLGAKGIKVEVSGRLGGAEIARSEWYREGRVPLHTLRADIDYNTAEAHTTYGVIGVKVWIFKGEILGGMAAVIESEKEPAAQPKKAPRGKGRK.

Residues 39–107 (VRKFLNKELA…PAQINIAEVK (69 aa)) enclose the KH type-2 domain.

Belongs to the universal ribosomal protein uS3 family. Part of the 30S ribosomal subunit. Forms a tight complex with proteins S10 and S14.

In terms of biological role, binds the lower part of the 30S subunit head. Binds mRNA in the 70S ribosome, positioning it for translation. The sequence is that of Small ribosomal subunit protein uS3 from Actinobacillus pleuropneumoniae serotype 5b (strain L20).